The primary structure comprises 151 residues: NADH dehydrogenase [ubiquinone] 1 beta subcomplex subunit 11, mitochondrial (151 aa).

The N-terminal 29 residues, 1–29, are a transit peptide targeting the mitochondrion; the sequence is MAARLLSLYGRCLSAAGAMRGLPAARVRW. The interval 40-62 is disordered; sequence GVEKKRQREPTMQWQEDPEPEDE. A helical membrane pass occupies residues 87–107; that stretch reads AVFFFGFSIVLVFGTTFVAYV.

Belongs to the complex I NDUFB11 subunit family. Complex I is composed of 45 different subunits. Interacts with BCAP31.

The protein resides in the mitochondrion inner membrane. Its function is as follows. Accessory subunit of the mitochondrial membrane respiratory chain NADH dehydrogenase (Complex I), that is believed not to be involved in catalysis. Complex I functions in the transfer of electrons from NADH to the respiratory chain. The immediate electron acceptor for the enzyme is believed to be ubiquinone. This is NADH dehydrogenase [ubiquinone] 1 beta subcomplex subunit 11, mitochondrial (Ndufb11) from Mus musculus (Mouse).